The sequence spans 164 residues: ATP synthase subunit b 1 (164 aa).

Residues 8–28 traverse the membrane as a helical segment; the sequence is AETWVAVGFAILMVVFVYFGV.

It belongs to the ATPase B chain family. F-type ATPases have 2 components, F(1) - the catalytic core - and F(0) - the membrane proton channel. F(1) has five subunits: alpha(3), beta(3), gamma(1), delta(1), epsilon(1). F(0) has three main subunits: a(1), b(2) and c(10-14). The alpha and beta chains form an alternating ring which encloses part of the gamma chain. F(1) is attached to F(0) by a central stalk formed by the gamma and epsilon chains, while a peripheral stalk is formed by the delta and b chains.

The protein resides in the cell inner membrane. F(1)F(0) ATP synthase produces ATP from ADP in the presence of a proton or sodium gradient. F-type ATPases consist of two structural domains, F(1) containing the extramembraneous catalytic core and F(0) containing the membrane proton channel, linked together by a central stalk and a peripheral stalk. During catalysis, ATP synthesis in the catalytic domain of F(1) is coupled via a rotary mechanism of the central stalk subunits to proton translocation. In terms of biological role, component of the F(0) channel, it forms part of the peripheral stalk, linking F(1) to F(0). The protein is ATP synthase subunit b 1 of Rhodopseudomonas palustris (strain BisA53).